Reading from the N-terminus, the 505-residue chain is Cytochrome P450 4Z1 (505 aa).

The Cytoplasmic segment spans residues 1 to 9 (MEPSWLQEL). A helical; Signal-anchor for type II membrane protein membrane pass occupies residues 10–30 (MAHPFLLLILLCMSLLLFQVI). The Lumenal segment spans residues 31–505 (RLYQRRRWMI…GIHVFAKKVC (475 aa)). Cys452 serves as a coordination point for heme.

This sequence belongs to the cytochrome P450 family. Heme is required as a cofactor. Preferentially detected in breast carcinoma tissue and mammary gland, whereas only marginal expression is found in all other tested tissues.

It is found in the endoplasmic reticulum membrane. Its subcellular location is the microsome membrane. The catalysed reaction is an organic molecule + reduced [NADPH--hemoprotein reductase] + O2 = an alcohol + oxidized [NADPH--hemoprotein reductase] + H2O + H(+). It carries out the reaction dodecanoate + reduced [NADPH--hemoprotein reductase] + O2 = 7-hydroxydodecanoate + oxidized [NADPH--hemoprotein reductase] + H2O + H(+). It catalyses the reaction dodecanoate + reduced [NADPH--hemoprotein reductase] + O2 = 8-hydroxydodecanoate + oxidized [NADPH--hemoprotein reductase] + H2O + H(+). The enzyme catalyses dodecanoate + reduced [NADPH--hemoprotein reductase] + O2 = 9-hydroxydodecanoate + oxidized [NADPH--hemoprotein reductase] + H2O + H(+). The catalysed reaction is dodecanoate + reduced [NADPH--hemoprotein reductase] + O2 = 10-hydroxydodecanoate + oxidized [NADPH--hemoprotein reductase] + H2O + H(+). It carries out the reaction dodecanoate + reduced [NADPH--hemoprotein reductase] + O2 = 11-hydroxydodecanoate + oxidized [NADPH--hemoprotein reductase] + H2O + H(+). It catalyses the reaction tetradecanoate + reduced [NADPH--hemoprotein reductase] + O2 = 9-hydroxytetradecanoate + oxidized [NADPH--hemoprotein reductase] + H2O + H(+). The enzyme catalyses tetradecanoate + reduced [NADPH--hemoprotein reductase] + O2 = 10-hydroxytetradecanoate + oxidized [NADPH--hemoprotein reductase] + H2O + H(+). The catalysed reaction is tetradecanoate + reduced [NADPH--hemoprotein reductase] + O2 = 11-hydroxytetradecanoate + oxidized [NADPH--hemoprotein reductase] + H2O + H(+). It carries out the reaction tetradecanoate + reduced [NADPH--hemoprotein reductase] + O2 = 12-hydroxytetradecanoate + oxidized [NADPH--hemoprotein reductase] + H2O + H(+). It catalyses the reaction (5Z,8Z,11Z,14Z)-eicosatetraenoate + reduced [NADPH--hemoprotein reductase] + O2 = (14S,15R)-epoxy-(5Z,8Z,11Z)-eicosatrienoate + oxidized [NADPH--hemoprotein reductase] + H2O + H(+). Its function is as follows. A cytochrome P450 monooxygenase that catalyzes the in-chain oxidation of fatty acids. Catalyzes the hydroxylation of carbon-hydrogen bonds. Hydroxylates lauric and myristic acids predominantly at the omega-4 and omega-2 positions, respectively. Catalyzes the epoxidation of double bonds of polyunsaturated fatty acids (PUFA). Displays an absolute stereoselectivity in the epoxidation of arachidonic acid producing the 14(S),15(R)-epoxyeicosatrienoic acid (EET) enantiomer. Mechanistically, uses molecular oxygen inserting one oxygen atom into a substrate, and reducing the second into a water molecule, with two electrons provided by NADPH via cytochrome P450 reductase (CPR; NADPH-ferrihemoprotein reductase). The chain is Cytochrome P450 4Z1 from Homo sapiens (Human).